The chain runs to 59 residues: Protein translocase subunit SecE (59 aa).

Residues 33–53 (GAGIALVGLLGFIIFAVMTFV) form a helical membrane-spanning segment.

Belongs to the SecE/SEC61-gamma family. As to quaternary structure, component of the Sec protein translocase complex. Heterotrimer consisting of SecY (alpha), SecG (beta) and SecE (gamma) subunits. The heterotrimers can form oligomers, although 1 heterotrimer is thought to be able to translocate proteins. Interacts with the ribosome. May interact with SecDF, and other proteins may be involved.

The protein resides in the cell membrane. Functionally, essential subunit of the Sec protein translocation channel SecYEG. Clamps together the 2 halves of SecY. May contact the channel plug during translocation. The chain is Protein translocase subunit SecE from Haloarcula marismortui (strain ATCC 43049 / DSM 3752 / JCM 8966 / VKM B-1809) (Halobacterium marismortui).